A 121-amino-acid chain; its full sequence is Putative RNase MJ1216 (121 aa).

Active-site residues include R76 and H81. The RX(4)HXY motif motif lies at 76-83 (RDKLIHQY). Y83 carries the post-translational modification O-di-AMP-tyrosine.

This sequence belongs to the HepT RNase toxin family. Homodimer, probably forms a complex with antitoxin MJ1215 or MJ1217. Modified by antitoxin MJ1215 or MJ1217; probably at least 2 successive AMPylation events occur on Tyr-83.

In terms of biological role, probable toxic component of a putative type VII toxin-antitoxin (TA) system, probably an RNase. Probably neutralized by antitoxin MJ1215 or MJ1217. Neutralization may be due to AMPylation by antitoxin. The protein is Putative RNase MJ1216 of Methanocaldococcus jannaschii (strain ATCC 43067 / DSM 2661 / JAL-1 / JCM 10045 / NBRC 100440) (Methanococcus jannaschii).